A 68-amino-acid chain; its full sequence is Small, acid-soluble spore protein I (68 aa).

It belongs to the SspI family.

It localises to the spore core. This Halalkalibacterium halodurans (strain ATCC BAA-125 / DSM 18197 / FERM 7344 / JCM 9153 / C-125) (Bacillus halodurans) protein is Small, acid-soluble spore protein I.